The sequence spans 200 residues: Cation channel sperm-associated auxiliary subunit zeta (200 aa).

The span at Met1 to Asp29 shows a compositional bias: basic and acidic residues. Disordered stretches follow at residues Met1–Trp31 and Asn58–Lys78.

Component of the CatSper complex or CatSpermasome composed of the core pore-forming members CATSPER1, CATSPER2, CATSPER3 and CATSPER4 as well as auxiliary members CATSPERB, CATSPERG, CATSPERD, CATSPERE, CATSPERZ, C2CD6/CATSPERT, TMEM249, TMEM262 and EFCAB9. HSPA1 may be an additional auxiliary complex member. The core complex members CATSPER1, CATSPER2, CATSPER3 and CATSPER4 form a heterotetrameric channel. The auxiliary CATSPERB, CATSPERG, CATSPERD and CATSPERE subunits form a pavilion-like structure over the pore which stabilizes the complex through interactions with CATSPER4, CATSPER3, CATSPER1 and CATSPER2 respectively. TMEM262/CATSPERH interacts with CATSPERB, further stabilizing the complex. C2CD6/CATSPERT interacts at least with CATSPERD and is required for targeting the CatSper complex in the flagellar membrane. Interacts with EFCAB9; the interaction is direct, Ca(2+)-dependent and connects EFCAB9 with the CatSper complex. Dissociates from EFCAB9 at elevated pH.

The protein localises to the cell projection. The protein resides in the cilium. It localises to the flagellum membrane. Auxiliary component of the CatSper complex, a complex involved in sperm cell hyperactivation. Sperm cell hyperactivation is needed for sperm motility which is essential late in the preparation of sperm for fertilization. Required for a distribution of the CatSper complex in linear quadrilateral nanodomains along the flagellum, maximizing fertilization inside the mammalian female reproductive tract. Together with EFCAB9, associates with the CatSper channel pore and is required for the two-row structure of each single CatSper channel. The chain is Cation channel sperm-associated auxiliary subunit zeta from Homo sapiens (Human).